The following is a 1050-amino-acid chain: Nuclear pore complex-interacting protein family member B3 (1050 aa).

The helical transmembrane segment at 63–87 (VIIAFPTSYKVVITLWIVYLWVSLL) threads the bilayer. Disordered stretches follow at residues 241–262 (NRMGHQPPPPTQQHSITDNSLS), 290–574 (LTPL…NIKT), and 785–1050 (ERLR…RRLS). Over residues 252-262 (QQHSITDNSLS) the composition is skewed to polar residues. The segment covering 349–359 (PLPPSALPSAP) has biased composition (pro residues). Basic and acidic residues-rich tracts occupy residues 406-416 (DNIKTPAERLR), 448-458 (DNIKTPAERLR), 490-500 (DNIKTPAERLR), 528-538 (DNIKTPAERLR), 820-830 (DNIKTPAERLR), 862-872 (DNIKTPAERLR), and 904-914 (DNIKTPAERLR).

The protein belongs to the NPIP family.

The protein localises to the membrane. This is Nuclear pore complex-interacting protein family member B3 (NPIPB3) from Homo sapiens (Human).